The following is a 221-amino-acid chain: Phosphatidylethanolamine-binding protein homolog F40A3.3 (221 aa).

Belongs to the phosphatidylethanolamine-binding protein family.

The protein is Phosphatidylethanolamine-binding protein homolog F40A3.3 of Caenorhabditis elegans.